Here is a 415-residue protein sequence, read N- to C-terminus: Phosphoglycerate kinase (415 aa).

Substrate is bound by residues 27–29 (DVN), arginine 44, 67–70 (HQGR), arginine 124, and arginine 164. Residues glutamate 336 and 362-365 (GGHM) contribute to the ATP site.

This sequence belongs to the phosphoglycerate kinase family. As to quaternary structure, monomer.

The protein localises to the cytoplasm. It carries out the reaction (2R)-3-phosphoglycerate + ATP = (2R)-3-phospho-glyceroyl phosphate + ADP. The protein operates within carbohydrate degradation; glycolysis; pyruvate from D-glyceraldehyde 3-phosphate: step 2/5. This Sulfolobus acidocaldarius (strain ATCC 33909 / DSM 639 / JCM 8929 / NBRC 15157 / NCIMB 11770) protein is Phosphoglycerate kinase.